The chain runs to 375 residues: Alcohol dehydrogenase class-3 chain H (375 aa).

N-acetylalanine is present on Ala-1. Zn(2+)-binding residues include Cys-46, His-68, Cys-98, Cys-101, Cys-104, Cys-112, and Cys-175.

This sequence belongs to the zinc-containing alcohol dehydrogenase family. Class-III subfamily. Homodimer or heterodimer with L chain. It depends on Zn(2+) as a cofactor.

It is found in the cytoplasm. It catalyses the reaction a primary alcohol + NAD(+) = an aldehyde + NADH + H(+). The catalysed reaction is a secondary alcohol + NAD(+) = a ketone + NADH + H(+). It carries out the reaction S-(hydroxymethyl)glutathione + NADP(+) = S-formylglutathione + NADPH + H(+). The enzyme catalyses S-(hydroxymethyl)glutathione + NAD(+) = S-formylglutathione + NADH + H(+). Class-III ADH is remarkably ineffective in oxidizing ethanol, but it readily catalyzes the oxidation of long-chain primary alcohols and the oxidation of S-(hydroxymethyl) glutathione. This Gadus morhua (Atlantic cod) protein is Alcohol dehydrogenase class-3 chain H.